A 449-amino-acid chain; its full sequence is UDP-N-acetylglucosamine 1-carboxyvinyltransferase (449 aa).

51 to 52 serves as a coordination point for phosphoenolpyruvate; sequence KN. Residue Arg-121 participates in UDP-N-acetyl-alpha-D-glucosamine binding. The active-site Proton donor is Cys-145. Cys-145 carries the 2-(S-cysteinyl)pyruvic acid O-phosphothioketal modification. Residues 150–154, Asp-333, and Ile-355 contribute to the UDP-N-acetyl-alpha-D-glucosamine site; that span reads RPVDQ.

This sequence belongs to the EPSP synthase family. MurA subfamily.

It localises to the cytoplasm. The enzyme catalyses phosphoenolpyruvate + UDP-N-acetyl-alpha-D-glucosamine = UDP-N-acetyl-3-O-(1-carboxyvinyl)-alpha-D-glucosamine + phosphate. It participates in cell wall biogenesis; peptidoglycan biosynthesis. Functionally, cell wall formation. Adds enolpyruvyl to UDP-N-acetylglucosamine. The sequence is that of UDP-N-acetylglucosamine 1-carboxyvinyltransferase from Burkholderia mallei (strain ATCC 23344).